Reading from the N-terminus, the 68-residue chain is Large ribosomal subunit protein uL29 (68 aa).

It belongs to the universal ribosomal protein uL29 family.

This Streptococcus pneumoniae (strain JJA) protein is Large ribosomal subunit protein uL29.